A 502-amino-acid polypeptide reads, in one-letter code: Glycerol kinase (502 aa).

T14 lines the ADP pocket. Residues T14, T15, and S16 each coordinate ATP. T14 is a sn-glycerol 3-phosphate binding site. R18 contacts ADP. 4 residues coordinate sn-glycerol 3-phosphate: R84, E85, Y136, and D246. Residues R84, E85, Y136, D246, and Q247 each coordinate glycerol. The ADP site is built by T268 and G311. ATP-binding residues include T268, G311, Q315, and G412. ADP is bound by residues G412 and N416.

The protein belongs to the FGGY kinase family. In terms of assembly, homotetramer and homodimer (in equilibrium). Heterodimer with EIIA-Glc. Binds 1 zinc ion per glycerol kinase EIIA-Glc dimer. The zinc ion is important for dimerization.

The catalysed reaction is glycerol + ATP = sn-glycerol 3-phosphate + ADP + H(+). It participates in polyol metabolism; glycerol degradation via glycerol kinase pathway; sn-glycerol 3-phosphate from glycerol: step 1/1. Its activity is regulated as follows. Activity of this regulatory enzyme is affected by several metabolites. Allosterically and non-competitively inhibited by fructose 1,6-bisphosphate (FBP) and unphosphorylated phosphocarrier protein EIIA-Glc (III-Glc), an integral component of the bacterial phosphotransferase (PTS) system. In terms of biological role, key enzyme in the regulation of glycerol uptake and metabolism. Catalyzes the phosphorylation of glycerol to yield sn-glycerol 3-phosphate. The sequence is that of Glycerol kinase from Escherichia coli O7:K1 (strain IAI39 / ExPEC).